The following is a 321-amino-acid chain: Lipoyl synthase (321 aa).

[4Fe-4S] cluster-binding residues include cysteine 68, cysteine 73, cysteine 79, cysteine 94, cysteine 98, cysteine 101, and serine 308. The region spanning 80 to 297 (FNHGTATFMI…KDYAEEIGFT (218 aa)) is the Radical SAM core domain.

It belongs to the radical SAM superfamily. Lipoyl synthase family. The cofactor is [4Fe-4S] cluster.

It is found in the cytoplasm. The catalysed reaction is [[Fe-S] cluster scaffold protein carrying a second [4Fe-4S](2+) cluster] + N(6)-octanoyl-L-lysyl-[protein] + 2 oxidized [2Fe-2S]-[ferredoxin] + 2 S-adenosyl-L-methionine + 4 H(+) = [[Fe-S] cluster scaffold protein] + N(6)-[(R)-dihydrolipoyl]-L-lysyl-[protein] + 4 Fe(3+) + 2 hydrogen sulfide + 2 5'-deoxyadenosine + 2 L-methionine + 2 reduced [2Fe-2S]-[ferredoxin]. It participates in protein modification; protein lipoylation via endogenous pathway; protein N(6)-(lipoyl)lysine from octanoyl-[acyl-carrier-protein]: step 2/2. In terms of biological role, catalyzes the radical-mediated insertion of two sulfur atoms into the C-6 and C-8 positions of the octanoyl moiety bound to the lipoyl domains of lipoate-dependent enzymes, thereby converting the octanoylated domains into lipoylated derivatives. This is Lipoyl synthase from Shewanella loihica (strain ATCC BAA-1088 / PV-4).